We begin with the raw amino-acid sequence, 548 residues long: Membrane protein insertase YidC (548 aa).

The chain crosses the membrane as a helical span at residues 6 to 26 (NLLVIALLFVSFMIWQAWEQD). The tract at residues 28–55 (NPQPQAQQTTQTTTTAAGSAADQGVPAS) is disordered. The segment covering 30–50 (QPQAQQTTQTTTTAAGSAADQ) has biased composition (low complexity). A run of 4 helical transmembrane segments spans residues 350-370 (FVGN…GIMY), 420-440 (LGGC…YYML), 458-478 (LSAQ…MFFI), and 499-519 (PVIF…YYIV).

It belongs to the OXA1/ALB3/YidC family. Type 1 subfamily. As to quaternary structure, interacts with the Sec translocase complex via SecD. Specifically interacts with transmembrane segments of nascent integral membrane proteins during membrane integration.

Its subcellular location is the cell inner membrane. Its function is as follows. Required for the insertion and/or proper folding and/or complex formation of integral membrane proteins into the membrane. Involved in integration of membrane proteins that insert both dependently and independently of the Sec translocase complex, as well as at least some lipoproteins. Aids folding of multispanning membrane proteins. This is Membrane protein insertase YidC from Escherichia coli O127:H6 (strain E2348/69 / EPEC).